Consider the following 132-residue polypeptide: Chemokine-like protein TAFA-5 (132 aa).

The signal sequence occupies residues M1–G43. N113 carries N-linked (GlcNAc...) asparagine glycosylation.

The protein belongs to the TAFA family.

The protein resides in the secreted. Its function is as follows. Acts as a chemokine-like protein by regulating cell proliferation and migration through activation of G protein-coupled receptors (GPCRs), such as S1PR2 and FPR2. Stimulates chemotactic migration of macrophages mediated by the MAPK3/ERK1 and AKT1 pathway. Blocks TNFSF11/RANKL-induced osteoclast formation from macrophages by inhibiting up-regulation of osteoclast fusogenic and differentiation genes. Stimulation of macrophage migration and inhibition of osteoclast formation is mediated through the GPCR FPR2. Acts as an adipokine by negatively regulating vascular smooth muscle cell (VSMC) proliferation and migration in response to platelet-derived growth factor stimulation via GPCR S1PR2 and G protein GNA12/GNA13-transmitted RHOA signaling. Inhibits injury-induced cell proliferation and neointima formation in the femoral arteries. The sequence is that of Chemokine-like protein TAFA-5 (TAFA5) from Bos taurus (Bovine).